We begin with the raw amino-acid sequence, 627 residues long: Phosphomethylpyrimidine synthase (627 aa).

Substrate is bound by residues Asn233, Met262, Tyr291, His327, 347 to 349, 388 to 391, and Glu427; these read SRG and DGLR. His431 provides a ligand contact to Zn(2+). Tyr454 contributes to the substrate binding site. His495 is a Zn(2+) binding site. The [4Fe-4S] cluster site is built by Cys575, Cys578, and Cys583.

Belongs to the ThiC family. In terms of assembly, homodimer. It depends on [4Fe-4S] cluster as a cofactor.

It catalyses the reaction 5-amino-1-(5-phospho-beta-D-ribosyl)imidazole + S-adenosyl-L-methionine = 4-amino-2-methyl-5-(phosphooxymethyl)pyrimidine + CO + 5'-deoxyadenosine + formate + L-methionine + 3 H(+). The protein operates within cofactor biosynthesis; thiamine diphosphate biosynthesis. Its function is as follows. Catalyzes the synthesis of the hydroxymethylpyrimidine phosphate (HMP-P) moiety of thiamine from aminoimidazole ribotide (AIR) in a radical S-adenosyl-L-methionine (SAM)-dependent reaction. This is Phosphomethylpyrimidine synthase from Acidithiobacillus ferrooxidans (strain ATCC 23270 / DSM 14882 / CIP 104768 / NCIMB 8455) (Ferrobacillus ferrooxidans (strain ATCC 23270)).